The sequence spans 729 residues: Fatty acid oxidation complex subunit alpha (729 aa).

The enoyl-CoA hydratase/isomerase stretch occupies residues 1–189 (MLYKGDTLYL…KIGLVDGVVK (189 aa)). D296 is a substrate binding site. The segment at 311–729 (ETPKQAAVLG…ARPVGDLKTA (419 aa)) is 3-hydroxyacyl-CoA dehydrogenase. NAD(+) contacts are provided by residues M324, D343, 400-402 (IVE), K407, and S429. Residue H450 is the For 3-hydroxyacyl-CoA dehydrogenase activity of the active site. N453 is an NAD(+) binding site. The substrate site is built by N500 and Y660. Positions 708 to 729 (RHNEPYYPPVEPARPVGDLKTA) are disordered.

This sequence in the N-terminal section; belongs to the enoyl-CoA hydratase/isomerase family. The protein in the C-terminal section; belongs to the 3-hydroxyacyl-CoA dehydrogenase family. Heterotetramer of two alpha chains (FadB) and two beta chains (FadA).

The catalysed reaction is a (3S)-3-hydroxyacyl-CoA + NAD(+) = a 3-oxoacyl-CoA + NADH + H(+). The enzyme catalyses a (3S)-3-hydroxyacyl-CoA = a (2E)-enoyl-CoA + H2O. It catalyses the reaction a 4-saturated-(3S)-3-hydroxyacyl-CoA = a (3E)-enoyl-CoA + H2O. It carries out the reaction (3S)-3-hydroxybutanoyl-CoA = (3R)-3-hydroxybutanoyl-CoA. The catalysed reaction is a (3Z)-enoyl-CoA = a 4-saturated (2E)-enoyl-CoA. The enzyme catalyses a (3E)-enoyl-CoA = a 4-saturated (2E)-enoyl-CoA. The protein operates within lipid metabolism; fatty acid beta-oxidation. Its function is as follows. Involved in the aerobic and anaerobic degradation of long-chain fatty acids via beta-oxidation cycle. Catalyzes the formation of 3-oxoacyl-CoA from enoyl-CoA via L-3-hydroxyacyl-CoA. It can also use D-3-hydroxyacyl-CoA and cis-3-enoyl-CoA as substrate. The chain is Fatty acid oxidation complex subunit alpha from Escherichia coli O157:H7.